Here is a 407-residue protein sequence, read N- to C-terminus: MEVYLVGGAVRDKLLGIPVYDQDWVVVGATAEQMLNAGYSPVGKDFPVFLHPKTKQEYALARTERKTGQGYKGFECFFSPDVTLEEDLLRRDLTINAIAMDSQGVLYDPYGGQQDLQDRILRHVSEAFVEDPLRVLRVARFAAKLAPLGFRVADETMQLMQSIVASGELSALTAERVWQEWHKSLLTPAPQQFLAVLRQCGALAVVLPEIDALFGVPQPEKWHPEIDTGIHTLLVAEQAAKLSSSAVVRFAAQVHDLGKGVTPPSEWPSHKMHCHTGLKLIKQLCERVRVPNEFRDLALMVCEQHSNIHRAAELKPQTMVKIFNKLDVWRKAERLNDILLCCQADHAGRQGLQDHPYPQAERIQLAYQAALSVEVQSVIQDGFKGPAIRDEQERRRIEAVKAALLNA.

2 residues coordinate ATP: glycine 8 and arginine 11. CTP is bound by residues glycine 8 and arginine 11. Residues aspartate 21 and aspartate 23 each contribute to the Mg(2+) site. Residues arginine 91, arginine 137, and arginine 140 each contribute to the ATP site. The CTP site is built by arginine 91, arginine 137, and arginine 140. An HD domain is found at 228–329; sequence TGIHTLLVAE…VKIFNKLDVW (102 aa).

It belongs to the tRNA nucleotidyltransferase/poly(A) polymerase family. Bacterial CCA-adding enzyme type 1 subfamily. As to quaternary structure, monomer. Can also form homodimers and oligomers. Mg(2+) is required as a cofactor. Ni(2+) serves as cofactor.

It carries out the reaction a tRNA precursor + 2 CTP + ATP = a tRNA with a 3' CCA end + 3 diphosphate. The enzyme catalyses a tRNA with a 3' CCA end + 2 CTP + ATP = a tRNA with a 3' CCACCA end + 3 diphosphate. Its function is as follows. Catalyzes the addition and repair of the essential 3'-terminal CCA sequence in tRNAs without using a nucleic acid template. Adds these three nucleotides in the order of C, C, and A to the tRNA nucleotide-73, using CTP and ATP as substrates and producing inorganic pyrophosphate. tRNA 3'-terminal CCA addition is required both for tRNA processing and repair. Also involved in tRNA surveillance by mediating tandem CCA addition to generate a CCACCA at the 3' terminus of unstable tRNAs. While stable tRNAs receive only 3'-terminal CCA, unstable tRNAs are marked with CCACCA and rapidly degraded. The chain is Multifunctional CCA protein from Vibrio vulnificus (strain YJ016).